The following is a 730-amino-acid chain: uncharacterized protein (730 aa).

The span at 615–625 (FDKENSFDPSD) shows a compositional bias: basic and acidic residues. Disordered regions lie at residues 615–667 (FDKE…SSFS) and 684–730 (KSGS…FGKI). 2 stretches are compositionally biased toward low complexity: residues 653-667 (SSSSAGSKKSSSSFS) and 684-701 (KSGSSSGNKSSSRRNSSS). Residues 713 to 723 (KKKKKKKKKKS) are compositionally biased toward basic residues.

This is an uncharacterized protein from Saccharomyces cerevisiae (strain ATCC 204508 / S288c) (Baker's yeast).